We begin with the raw amino-acid sequence, 601 residues long: Probable sphingosine-1-phosphate lyase (601 aa).

K360 is modified (N6-(pyridoxal phosphate)lysine).

The protein belongs to the group II decarboxylase family. Sphingosine-1-phosphate lyase subfamily. The cofactor is pyridoxal 5'-phosphate.

The catalysed reaction is sphinganine 1-phosphate = hexadecanal + phosphoethanolamine. Functionally, cleaves phosphorylated sphingoid bases (PSBs), such as sphingosine-1-phosphate, into fatty aldehydes and phosphoethanolamine. Possibly implicated in influencing the macrophage autophagy pathway. The sequence is that of Probable sphingosine-1-phosphate lyase from Legionella pneumophila subsp. pneumophila (strain Philadelphia 1 / ATCC 33152 / DSM 7513).